The chain runs to 298 residues: Golgi to ER traffic protein 2 (298 aa).

Over 1–164 the chain is Cytoplasmic; the sequence is MSEPVVDTAE…LEYNTYNQKL (164 aa). Residues 40-92 form a disordered region; it reads ILSQGSSVKTSGVKSVLDQEKEATPSHDEDPEIQDITEITTPPPRTPPIGEDA. The segment covering 42-55 has biased composition (low complexity); it reads SQGSSVKTSGVKSV. Residues 56 to 67 are compositionally biased toward basic and acidic residues; sequence LDQEKEATPSHD. Residues 165 to 185 traverse the membrane as a helical segment; sequence WKFRFLLVRVSVTLFNFFYHY. The Lumenal portion of the chain corresponds to 186-211; that stretch reads INLSNFHASNYAYVRDLSSEKYPVRD. The helical transmembrane segment at 212–231 threads the bilayer; that stretch reads FFTWFATTEVVLVAAYYSIF. Residues 232-275 lie on the Cytoplasmic side of the membrane; it reads HSLGLFHAANQNSFVLKAMSMGSMVLPQLEHYKPLVARFLGYYE. Residues 276 to 296 traverse the membrane as a helical segment; it reads LLGIVLGDLSLVIVLFGLLSF. Residues 297 to 298 are Lumenal-facing; it reads AN.

This sequence belongs to the GET2 family. Component of the Golgi to ER traffic (GET) complex, which is composed of GET1, GET2 and GET3. Within the complex, GET1 and GET2 form a heterotetramer which is stabilized by phosphatidylinositol binding and which binds to the GET3 homodimer.

The protein resides in the endoplasmic reticulum membrane. Its subcellular location is the golgi apparatus membrane. Functionally, required for the post-translational delivery of tail-anchored (TA) proteins to the endoplasmic reticulum. Together with GET1, acts as a membrane receptor for soluble GET3, which recognizes and selectively binds the transmembrane domain of TA proteins in the cytosol. The GET complex cooperates with the HDEL receptor ERD2 to mediate the ATP-dependent retrieval of resident ER proteins that contain a C-terminal H-D-E-L retention signal from the Golgi to the ER. This is Golgi to ER traffic protein 2 from Candida albicans (strain SC5314 / ATCC MYA-2876) (Yeast).